Reading from the N-terminus, the 337-residue chain is DNA-directed RNA polymerase subunit alpha (337 aa).

Residues 1–233 form an alpha N-terminal domain (alpha-NTD) region; that stretch reads MIREKVTVST…DLFIPFLHME (233 aa). The interval 266–337 is alpha C-terminal domain (alpha-CTD); that stretch reads KLALKSIFID…FAIDLPKNQF (72 aa).

This sequence belongs to the RNA polymerase alpha chain family. As to quaternary structure, in plastids the minimal PEP RNA polymerase catalytic core is composed of four subunits: alpha, beta, beta', and beta''. When a (nuclear-encoded) sigma factor is associated with the core the holoenzyme is formed, which can initiate transcription.

It localises to the plastid. It is found in the chloroplast. The catalysed reaction is RNA(n) + a ribonucleoside 5'-triphosphate = RNA(n+1) + diphosphate. Functionally, DNA-dependent RNA polymerase catalyzes the transcription of DNA into RNA using the four ribonucleoside triphosphates as substrates. This chain is DNA-directed RNA polymerase subunit alpha, found in Ipomoea purpurea (Common morning glory).